The chain runs to 90 residues: Long neurotoxin 1 (90 aa).

Positions 1–21 (MKTLLLTLVVVTIVCLDVGNS) are cleaved as a signal peptide. Intrachain disulfides connect cysteine 24/cysteine 42, cysteine 35/cysteine 63, cysteine 48/cysteine 52, cysteine 67/cysteine 78, and cysteine 79/cysteine 84.

It belongs to the three-finger toxin family. Long-chain subfamily. Type II alpha-neurotoxin sub-subfamily. As to expression, expressed by the venom gland.

The protein localises to the secreted. Functionally, binds with high affinity to muscular (alpha-1/CHRNA1) and neuronal (alpha-7/CHRNA7) nicotinic acetylcholine receptor (nAChR) and inhibits acetylcholine from binding to the receptor, thereby impairing neuromuscular and neuronal transmission. The protein is Long neurotoxin 1 of Austrelaps superbus (Lowland copperhead snake).